Here is a 688-residue protein sequence, read N- to C-terminus: Two-component response regulator ORR23 (688 aa).

The Response regulatory domain occupies 25–140; that stretch reads RVLAVDDDPV…ELRNIWQHVI (116 aa). 4-aspartylphosphate is present on aspartate 76. The tract at residues 161–212 is disordered; it reads PPNADSDHVHGHVTCGSPDQSGRPSKKRKEYCSEEEDEGEVNTQDIDDPSAP. Positions 193–208 are enriched in acidic residues; it reads SEEEDEGEVNTQDIDD. Positions 211-270 form a DNA-binding region, myb-like GARP; the sequence is APKKPRVVWSVELHRKFVAAVNQLGIDKAVPKRILELMNVEKLTRENVASHLQKYRLYLK.

Belongs to the ARR family. Type-B subfamily. In terms of processing, two-component system major event consists of a His-to-Asp phosphorelay between a sensor histidine kinase (HK) and a response regulator (RR). In plants, the His-to-Asp phosphorelay involves an additional intermediate named Histidine-containing phosphotransfer protein (HPt). This multistep phosphorelay consists of a His-Asp-His-Asp sequential transfer of a phosphate group between first a His and an Asp of the HK protein, followed by the transfer to a conserved His of the HPt protein and finally the transfer to an Asp in the receiver domain of the RR protein.

Its subcellular location is the nucleus. In terms of biological role, transcriptional activator that binds specific DNA sequence. Functions as a response regulator involved in His-to-Asp phosphorelay signal transduction system. Phosphorylation of the Asp residue in the receiver domain activates the ability of the protein to promote the transcription of target genes. May directly activate some type-A response regulators in response to cytokinins. This chain is Two-component response regulator ORR23, found in Oryza sativa subsp. indica (Rice).